The sequence spans 219 residues: Proteasome subunit beta (219 aa).

Residues M1–G14 constitute a propeptide, removed in mature form; by autocatalysis. T15 serves as the catalytic Nucleophile.

The protein belongs to the peptidase T1B family. The 20S proteasome core is composed of 14 alpha and 14 beta subunits that assemble into four stacked heptameric rings, resulting in a barrel-shaped structure. The two inner rings, each composed of seven catalytic beta subunits, are sandwiched by two outer rings, each composed of seven alpha subunits. The catalytic chamber with the active sites is on the inside of the barrel. Has a gated structure, the ends of the cylinder being occluded by the N-termini of the alpha-subunits. Is capped at one or both ends by the proteasome regulatory ATPase, PAN.

It localises to the cytoplasm. It carries out the reaction Cleavage of peptide bonds with very broad specificity.. With respect to regulation, the formation of the proteasomal ATPase PAN-20S proteasome complex, via the docking of the C-termini of PAN into the intersubunit pockets in the alpha-rings, triggers opening of the gate for substrate entry. Interconversion between the open-gate and close-gate conformations leads to a dynamic regulation of the 20S proteasome proteolysis activity. Its function is as follows. Component of the proteasome core, a large protease complex with broad specificity involved in protein degradation. This is Proteasome subunit beta from Methanococcus vannielii (strain ATCC 35089 / DSM 1224 / JCM 13029 / OCM 148 / SB).